The chain runs to 555 residues: Sulfite reductase [ferredoxin] (555 aa).

Positions 1–22 (MTTARPAKARNEGQWALGHREP) are disordered. Residues 69–161 (YTQREQGYDG…DVGLQTTEAC (93 aa)) constitute a cross-link (3'-(S-cysteinyl)-tyrosine (Tyr-Cys)). The [4Fe-4S] cluster site is built by Cys-417, Cys-423, Cys-463, and Cys-467. Cys-467 contacts siroheme.

This sequence belongs to the nitrite and sulfite reductase 4Fe-4S domain family. Monomer. Siroheme serves as cofactor. The cofactor is [4Fe-4S] cluster.

The enzyme catalyses hydrogen sulfide + 6 oxidized [2Fe-2S]-[ferredoxin] + 3 H2O = sulfite + 6 reduced [2Fe-2S]-[ferredoxin] + 7 H(+). In terms of biological role, catalyzes the reduction of sulfite to sulfide, a step in the biosynthesis of sulfur-containing amino acids and cofactors. The sequence is that of Sulfite reductase [ferredoxin] (sir) from Mycobacterium bovis (strain ATCC BAA-935 / AF2122/97).